A 186-amino-acid chain; its full sequence is Potassium-transporting ATPase KdpC subunit (186 aa).

The chain crosses the membrane as a helical span at residues 10–30 (LTIITMVLCGFLFPLAITLIG).

It belongs to the KdpC family. The system is composed of three essential subunits: KdpA, KdpB and KdpC.

It is found in the cell membrane. In terms of biological role, part of the high-affinity ATP-driven potassium transport (or Kdp) system, which catalyzes the hydrolysis of ATP coupled with the electrogenic transport of potassium into the cytoplasm. This subunit acts as a catalytic chaperone that increases the ATP-binding affinity of the ATP-hydrolyzing subunit KdpB by the formation of a transient KdpB/KdpC/ATP ternary complex. The polypeptide is Potassium-transporting ATPase KdpC subunit (Staphylococcus aureus (strain COL)).